The primary structure comprises 425 residues: Glutamate-1-semialdehyde 2,1-aminomutase (425 aa).

N6-(pyridoxal phosphate)lysine is present on lysine 265.

The protein belongs to the class-III pyridoxal-phosphate-dependent aminotransferase family. HemL subfamily. In terms of assembly, homodimer. Requires pyridoxal 5'-phosphate as cofactor.

It is found in the cytoplasm. The catalysed reaction is (S)-4-amino-5-oxopentanoate = 5-aminolevulinate. The protein operates within porphyrin-containing compound metabolism; protoporphyrin-IX biosynthesis; 5-aminolevulinate from L-glutamyl-tRNA(Glu): step 2/2. This is Glutamate-1-semialdehyde 2,1-aminomutase from Chromobacterium violaceum (strain ATCC 12472 / DSM 30191 / JCM 1249 / CCUG 213 / NBRC 12614 / NCIMB 9131 / NCTC 9757 / MK).